The following is an 89-amino-acid chain: Small ribosomal subunit protein uS15 (89 aa).

Residues Met-1 to Asp-21 are compositionally biased toward basic and acidic residues. The segment at Met-1–Glu-26 is disordered.

Belongs to the universal ribosomal protein uS15 family. In terms of assembly, part of the 30S ribosomal subunit. Forms a bridge to the 50S subunit in the 70S ribosome, contacting the 23S rRNA.

One of the primary rRNA binding proteins, it binds directly to 16S rRNA where it helps nucleate assembly of the platform of the 30S subunit by binding and bridging several RNA helices of the 16S rRNA. Functionally, forms an intersubunit bridge (bridge B4) with the 23S rRNA of the 50S subunit in the ribosome. This Sphingopyxis alaskensis (strain DSM 13593 / LMG 18877 / RB2256) (Sphingomonas alaskensis) protein is Small ribosomal subunit protein uS15.